The following is a 321-amino-acid chain: Ribosomal RNA small subunit methyltransferase H (321 aa).

Residues 40–42, aspartate 60, phenylalanine 84, aspartate 106, and glutamine 113 contribute to the S-adenosyl-L-methionine site; that span reads GGH.

It belongs to the methyltransferase superfamily. RsmH family.

Its subcellular location is the cytoplasm. The catalysed reaction is cytidine(1402) in 16S rRNA + S-adenosyl-L-methionine = N(4)-methylcytidine(1402) in 16S rRNA + S-adenosyl-L-homocysteine + H(+). Its function is as follows. Specifically methylates the N4 position of cytidine in position 1402 (C1402) of 16S rRNA. This Histophilus somni (strain 2336) (Haemophilus somnus) protein is Ribosomal RNA small subunit methyltransferase H.